The sequence spans 443 residues: 26S proteasome regulatory subunit rpn501 (443 aa).

S209 bears the Phosphoserine mark. The region spanning 230 to 402 is the PCI domain; sequence DVCKYYRAVY…QVISFKKSQN (173 aa).

Belongs to the proteasome subunit p55 family.

Its subcellular location is the nucleus. In terms of biological role, acts as a regulatory subunit of the 26S proteasome which is involved in the ATP-dependent degradation of ubiquitinated proteins. Required for proper proteasome assembly. The chain is 26S proteasome regulatory subunit rpn501 (rpn501) from Schizosaccharomyces pombe (strain 972 / ATCC 24843) (Fission yeast).